Reading from the N-terminus, the 366-residue chain is UDP-N-acetylglucosamine--N-acetylmuramyl-(pentapeptide) pyrophosphoryl-undecaprenol N-acetylglucosamine transferase (366 aa).

UDP-N-acetyl-alpha-D-glucosamine-binding positions include 14 to 16 (TGG), N125, R168, S196, and Q297.

It belongs to the glycosyltransferase 28 family. MurG subfamily.

It localises to the cell inner membrane. It catalyses the reaction di-trans,octa-cis-undecaprenyl diphospho-N-acetyl-alpha-D-muramoyl-L-alanyl-D-glutamyl-meso-2,6-diaminopimeloyl-D-alanyl-D-alanine + UDP-N-acetyl-alpha-D-glucosamine = di-trans,octa-cis-undecaprenyl diphospho-[N-acetyl-alpha-D-glucosaminyl-(1-&gt;4)]-N-acetyl-alpha-D-muramoyl-L-alanyl-D-glutamyl-meso-2,6-diaminopimeloyl-D-alanyl-D-alanine + UDP + H(+). Its pathway is cell wall biogenesis; peptidoglycan biosynthesis. Cell wall formation. Catalyzes the transfer of a GlcNAc subunit on undecaprenyl-pyrophosphoryl-MurNAc-pentapeptide (lipid intermediate I) to form undecaprenyl-pyrophosphoryl-MurNAc-(pentapeptide)GlcNAc (lipid intermediate II). The sequence is that of UDP-N-acetylglucosamine--N-acetylmuramyl-(pentapeptide) pyrophosphoryl-undecaprenol N-acetylglucosamine transferase from Rhodopseudomonas palustris (strain HaA2).